Consider the following 203-residue polypeptide: Endo-type membrane-bound lytic murein transglycosylase A (203 aa).

Residues 1–15 (MKLRWLLILVVFLAG) form the signal peptide. Residue Cys16 is the site of N-palmitoyl cysteine attachment. Residue Cys16 is the site of S-diacylglycerol cysteine attachment.

This sequence belongs to the transglycosylase Slt family.

The protein resides in the cell outer membrane. The enzyme catalyses Endolytic cleavage of the (1-&gt;4)-beta-glycosidic linkage between N-acetylmuramic acid (MurNAc) and N-acetylglucosamine (GlcNAc) residues in peptidoglycan with concomitant formation of a 1,6-anhydrobond in the MurNAc residue.. Murein-degrading enzyme. May play a role in recycling of muropeptides during cell elongation and/or cell division. Preferentially cleaves at a distance of more than two disaccharide units from the ends of the glycan chain. This Klebsiella pneumoniae subsp. pneumoniae (strain ATCC 700721 / MGH 78578) protein is Endo-type membrane-bound lytic murein transglycosylase A.